A 138-amino-acid chain; its full sequence is Acidic phospholipase A2 inhibitor vaspin A chain (138 aa).

The first 16 residues, 1–16 (MRTLWIVAVCLIGVEG), serve as a signal peptide directing secretion. 7 disulfide bridges follow: Cys-42/Cys-131, Cys-44/Cys-60, Cys-59/Cys-111, Cys-65/Cys-138, Cys-66/Cys-104, Cys-73/Cys-97, and Cys-91/Cys-102.

This sequence belongs to the phospholipase A2 family. Group II subfamily. D49 sub-subfamily. As to quaternary structure, heterodimer of a toxic basic protein having phospholipase A2 activity (B chain (AC Q8JFG0)) and a non-toxic acidic protein functioning as its inhibitor (A chain). Expressed by the venom gland.

It localises to the secreted. Its function is as follows. Heterodimer: postsynaptic neurotoxin. Functionally, monomer: the acidic chain inhibits the basic phospholipase A2 of the complex. This chain is Acidic phospholipase A2 inhibitor vaspin A chain, found in Vipera aspis aspis (Aspic viper).